The primary structure comprises 372 residues: NAD(P)H-quinone oxidoreductase subunit 1 (372 aa).

8 helical membrane-spanning segments follow: residues 27–47, 97–117, 128–148, 176–196, 204–224, 266–286, 308–328, and 347–367; these read IIWL…GVLV, ILFT…WLIV, VGIG…GLLM, LALS…IDIV, ILSW…ICAL, ILSA…PIPV, SIGI…AILL, and FLLP…LALP.

The protein belongs to the complex I subunit 1 family. NDH-1 is composed of at least 11 different subunits.

It localises to the cellular thylakoid membrane. The catalysed reaction is a plastoquinone + NADH + (n+1) H(+)(in) = a plastoquinol + NAD(+) + n H(+)(out). It carries out the reaction a plastoquinone + NADPH + (n+1) H(+)(in) = a plastoquinol + NADP(+) + n H(+)(out). Functionally, NDH-1 shuttles electrons from an unknown electron donor, via FMN and iron-sulfur (Fe-S) centers, to quinones in the respiratory and/or the photosynthetic chain. The immediate electron acceptor for the enzyme in this species is believed to be plastoquinone. Couples the redox reaction to proton translocation, and thus conserves the redox energy in a proton gradient. The protein is NAD(P)H-quinone oxidoreductase subunit 1 of Prochlorococcus marinus (strain MIT 9515).